A 115-amino-acid polypeptide reads, in one-letter code: Virion membrane protein OPG147 (115 aa).

A helical; Signal-anchor for type III membrane protein membrane pass occupies residues 1–21; sequence MITLFLILCYFILIFNIIVPA.

It belongs to the orthopoxvirus OPG147 family. As to quaternary structure, part of a stable entry-fusion complex (EFC) which is at least composed of proteins OPG143, OPG147, OPG155, OPG086, OPG094, OPG107, OPG104, and OPG099. Formation of the viral membrane is necessary for the assembly of the complex. Contains two intramolecular disulfide bonds. They are created by the viral disulfide bond formation pathway, a poxvirus-specific pathway that operates on the cytoplasmic side of the MV membranes.

It localises to the virion membrane. Its function is as follows. Envelope protein part of the entry-fusion complex responsible for the virus membrane fusion with host cell membrane during virus entry. Also plays a role in cell-cell fusion (syncytium formation). The polypeptide is Virion membrane protein OPG147 (OPG147) (Monkeypox virus).